The primary structure comprises 94 residues: MDEYTNDFPWMYIVICLTTIISVTIFYILVSFFIKRYRNRKNEELGHALITKIVYTPHYNSQPIINGSGHYSIINQPIQPQQQQPQNYYSSMIV.

Residues 13 to 33 form a helical membrane-spanning segment; that stretch reads IVICLTTIISVTIFYILVSFF.

It localises to the membrane. This is an uncharacterized protein from Dictyostelium discoideum (Social amoeba).